Consider the following 66-residue polypeptide: Ocellatin-PT2 (66 aa).

The signal sequence occupies residues 1 to 22; that stretch reads MAFLKKSLFLVLFLGLVSLSIC. Positions 23-39 are excised as a propeptide; it reads DEEKRQDEDDDDDDDEE. Valine amide is present on valine 66.

In terms of tissue distribution, expressed by the skin glands.

Its subcellular location is the secreted. In terms of biological role, has no antibacterial activity against Gram-negative bacteria E.coli ATCC 25922, S.pneumoniae ATCC 700603 and S.choleraesuis ATCC 14028 or against Gram-positive bacterium S.aureus ATCC 29313. Shows no hemolytic activity and no cytotoxicity. The polypeptide is Ocellatin-PT2 (Leptodactylus pustulatus (Ceara white-lipped frog)).